The sequence spans 411 residues: Multidrug resistance protein MdtA (411 aa).

The signal sequence occupies residues 1-26; the sequence is MNNNKKTKKRFSLIIILLIVIAGAIA. Polar residues predominate over residues 35–55; sequence SAPPVSKDTPTANTPNRSTAG. Residues 35-64 are disordered; the sequence is SAPPVSKDTPTANTPNRSTAGSRRPPMPPV.

This sequence belongs to the membrane fusion protein (MFP) (TC 8.A.1) family. Part of a tripartite efflux system composed of MdtA, MdtB and MdtC.

The protein localises to the cell inner membrane. This is Multidrug resistance protein MdtA from Proteus mirabilis (strain HI4320).